Reading from the N-terminus, the 416-residue chain is Serine hydroxymethyltransferase (416 aa).

Residues Leu-121 and 125–127 (GHL) contribute to the (6S)-5,6,7,8-tetrahydrofolate site. Position 230 is an N6-(pyridoxal phosphate)lysine (Lys-230). (6S)-5,6,7,8-tetrahydrofolate is bound at residue 355–357 (SPF).

This sequence belongs to the SHMT family. In terms of assembly, homodimer. Pyridoxal 5'-phosphate serves as cofactor.

The protein localises to the cytoplasm. The catalysed reaction is (6R)-5,10-methylene-5,6,7,8-tetrahydrofolate + glycine + H2O = (6S)-5,6,7,8-tetrahydrofolate + L-serine. It functions in the pathway one-carbon metabolism; tetrahydrofolate interconversion. Its pathway is amino-acid biosynthesis; glycine biosynthesis; glycine from L-serine: step 1/1. Catalyzes the reversible interconversion of serine and glycine with tetrahydrofolate (THF) serving as the one-carbon carrier. This reaction serves as the major source of one-carbon groups required for the biosynthesis of purines, thymidylate, methionine, and other important biomolecules. Also exhibits THF-independent aldolase activity toward beta-hydroxyamino acids, producing glycine and aldehydes, via a retro-aldol mechanism. The chain is Serine hydroxymethyltransferase from Streptococcus thermophilus (strain ATCC BAA-250 / LMG 18311).